Consider the following 82-residue polypeptide: Toxin GTx1-15 (82 aa).

An N-terminal signal peptide occupies residues 1 to 21 (MKTSVVFVIAGLALLSVACYA). The propeptide occupies 22–46 (SELKEQSSINEVLSTIFHFEQPEER). 3 cysteine pairs are disulfide-bonded: C48–C63, C55–C69, and C62–C76. At F80 the chain carries Phenylalanine amide.

Belongs to the neurotoxin 10 (Hwtx-1) family. 08 (Gtx1-15) subfamily. As to expression, expressed by the venom gland.

It is found in the secreted. Its function is as follows. Potent voltage-gated sodium channel blocker. Potently inhibits the voltage-gated sodium channels Nav1.7/SCN9A (IC(50)=0.58-10 nM). Shows a moderate activity on Nav1.1/SCN1A (IC(50)=6 nM), Nav1.2/SCN2A (IC(50)=5-128 nM), Nav1.3/SCN3A (IC(50)=20.3-170 nM), and Nav1.6/SCN8A (IC(50)=17-20.1 nM). Shows an unclear inhibition of Nav1.4/SCN4A (IC(50)=200 nM to &gt;10 uM), Nav1.5/SCN5A (IC(50)=140 nM to &gt;10 uM) and Nav1.8/SCN10A (IC(50)=68-12200 nM). Weakly blocks the low voltage-gated calcium channels Cav3.1/CACNA1G (30% inhibition of the peak current by 9.8 nM of the toxin). It shows moderate affinity for lipid bilayers. The chain is Toxin GTx1-15 from Grammostola rosea (Chilean rose tarantula).